Here is a 384-residue protein sequence, read N- to C-terminus: MANEFKFTDVGEGLHEGKVTEILKQVGDQIKIDEALFVVETDKVTTELPSPFAGTISAINVKVGDVVSIGQVMAVIGEKTSTPLVEPKPQPTEEVAKVKEAGASVVGEIKVSDNLFPIFGVKPHATPAVKDTKVASSTNITVETTQKPESKTEQKTIAISTMRKAIAEAMTKSHAIIPTTVLTFYVNATKLKQYRESVNGYALSKYSMKISYFAFFVKAIVNALKKFPVFNASYDPDQNEIVLNDDINVGIAVDTEEGLIVPNIKQAQTKSVVEIAQAIVDLANKARTKKIKLTDLNKGTISVTNFGSLGAAVGTPIIKYPEMCIVATGNLEERIVKVENGIAVHTILPLTIAADHRWVDGADVGRFGKEIAKQIEELIDLTVA.

Residues 2–77 (ANEFKFTDVG…SIGQVMAVIG (76 aa)) form the Lipoyl-binding domain. N6-lipoyllysine is present on Lys-43. His-356 is a catalytic residue.

The protein belongs to the 2-oxoacid dehydrogenase family. Forms a 24-polypeptide structural core with octahedral symmetry. Requires (R)-lipoate as cofactor.

The catalysed reaction is N(6)-[(R)-dihydrolipoyl]-L-lysyl-[protein] + acetyl-CoA = N(6)-[(R)-S(8)-acetyldihydrolipoyl]-L-lysyl-[protein] + CoA. Its function is as follows. The pyruvate dehydrogenase complex catalyzes the overall conversion of pyruvate to acetyl-CoA and CO(2). It contains multiple copies of three enzymatic components: pyruvate dehydrogenase (E1), dihydrolipoamide acetyltransferase (E2) and lipoamide dehydrogenase (E3). The sequence is that of Dihydrolipoyllysine-residue acetyltransferase component of pyruvate dehydrogenase complex (pdhC) from Mycoplasma genitalium (strain ATCC 33530 / DSM 19775 / NCTC 10195 / G37) (Mycoplasmoides genitalium).